We begin with the raw amino-acid sequence, 225 residues long: UPF0173 metal-dependent hydrolase Tneu_1348 (225 aa).

This sequence belongs to the UPF0173 family.

In Pyrobaculum neutrophilum (strain DSM 2338 / JCM 9278 / NBRC 100436 / V24Sta) (Thermoproteus neutrophilus), this protein is UPF0173 metal-dependent hydrolase Tneu_1348.